Reading from the N-terminus, the 502-residue chain is Lysine--tRNA ligase (502 aa).

Mg(2+)-binding residues include glutamate 403 and glutamate 410.

It belongs to the class-II aminoacyl-tRNA synthetase family. As to quaternary structure, homodimer. The cofactor is Mg(2+).

The protein localises to the cytoplasm. It catalyses the reaction tRNA(Lys) + L-lysine + ATP = L-lysyl-tRNA(Lys) + AMP + diphosphate. The chain is Lysine--tRNA ligase from Synechococcus sp. (strain CC9605).